The sequence spans 349 residues: Protein-glutamate methylesterase/protein-glutamine glutaminase (349 aa).

The Response regulatory domain occupies Arg-5–Met-122. Asp-56 carries the 4-aspartylphosphate modification. The region spanning Leu-152–Gly-344 is the CheB-type methylesterase domain. Active-site residues include Ser-164, His-190, and Asp-286.

This sequence belongs to the CheB family. In terms of processing, phosphorylated by CheA. Phosphorylation of the N-terminal regulatory domain activates the methylesterase activity.

It is found in the cytoplasm. It catalyses the reaction [protein]-L-glutamate 5-O-methyl ester + H2O = L-glutamyl-[protein] + methanol + H(+). It carries out the reaction L-glutaminyl-[protein] + H2O = L-glutamyl-[protein] + NH4(+). Functionally, involved in chemotaxis. Part of a chemotaxis signal transduction system that modulates chemotaxis in response to various stimuli. Catalyzes the demethylation of specific methylglutamate residues introduced into the chemoreceptors (methyl-accepting chemotaxis proteins or MCP) by CheR. Also mediates the irreversible deamidation of specific glutamine residues to glutamic acid. The polypeptide is Protein-glutamate methylesterase/protein-glutamine glutaminase (Salmonella paratyphi A (strain ATCC 9150 / SARB42)).